A 262-amino-acid polypeptide reads, in one-letter code: Tryptophan synthase alpha chain (262 aa).

Active-site proton acceptor residues include Glu49 and Asp60.

Belongs to the TrpA family. As to quaternary structure, tetramer of two alpha and two beta chains.

It carries out the reaction (1S,2R)-1-C-(indol-3-yl)glycerol 3-phosphate + L-serine = D-glyceraldehyde 3-phosphate + L-tryptophan + H2O. The protein operates within amino-acid biosynthesis; L-tryptophan biosynthesis; L-tryptophan from chorismate: step 5/5. Its function is as follows. The alpha subunit is responsible for the aldol cleavage of indoleglycerol phosphate to indole and glyceraldehyde 3-phosphate. In Thermoanaerobacter pseudethanolicus (strain ATCC 33223 / 39E) (Clostridium thermohydrosulfuricum), this protein is Tryptophan synthase alpha chain.